A 78-amino-acid chain; its full sequence is Large ribosomal subunit protein uL29 (78 aa).

It belongs to the universal ribosomal protein uL29 family.

In Rippkaea orientalis (strain PCC 8801 / RF-1) (Cyanothece sp. (strain PCC 8801)), this protein is Large ribosomal subunit protein uL29.